The primary structure comprises 258 residues: Transmembrane O-methyltransferase homolog (258 aa).

S-adenosyl-L-methionine is bound by residues Glu104, 106–107, Ser112, Glu130, and Ser160; that span reads GT.

Belongs to the class I-like SAM-binding methyltransferase superfamily. Cation-dependent O-methyltransferase family. In terms of assembly, interacts with LHFPL5, PCDH15, TMC1, TMC2 and TMIE. The interaction of TOMT with TMC1 and TMC2 is required for the transportation of TMC1/2 into the stereocilia of hair cells. Interacts directly with TMC1. In terms of tissue distribution, widely expressed with high levels in outer and inner hair cells of the cochlea and vestibule.

The protein localises to the cytoplasm. It is found in the endoplasmic reticulum. The catalysed reaction is a catechol + S-adenosyl-L-methionine = a guaiacol + S-adenosyl-L-homocysteine + H(+). Its function is as follows. Catalyzes the O-methylation, and thereby the inactivation, of catecholamine neurotransmitters and catechol hormones. Required for auditory function. Component of the cochlear hair cell's mechanotransduction (MET) machinery. Involved in the assembly of the asymmetric tip-link MET complex. Required for transportation of TMC1 and TMC2 proteins into the mechanically sensitive stereocilia of the hair cells. The function in MET is independent of the enzymatic activity. This chain is Transmembrane O-methyltransferase homolog, found in Mus musculus (Mouse).